Reading from the N-terminus, the 166-residue chain is Large ribosomal subunit protein uL10 (166 aa).

This sequence belongs to the universal ribosomal protein uL10 family. Part of the ribosomal stalk of the 50S ribosomal subunit. The N-terminus interacts with L11 and the large rRNA to form the base of the stalk. The C-terminus forms an elongated spine to which L12 dimers bind in a sequential fashion forming a multimeric L10(L12)X complex.

In terms of biological role, forms part of the ribosomal stalk, playing a central role in the interaction of the ribosome with GTP-bound translation factors. The sequence is that of Large ribosomal subunit protein uL10 from Azotobacter vinelandii (strain DJ / ATCC BAA-1303).